Consider the following 325-residue polypeptide: uncharacterized protein (325 aa).

Polar residues-rich tracts occupy residues 1-21 and 29-57; these read MSYQ…SSSA and EPFS…SSRA. The tract at residues 1-325 is disordered; sequence MSYQQRANDS…LKTGHHSERY (325 aa). Positions 86–109 are enriched in basic and acidic residues; the sequence is ESRKKEQSDVRGGDTSYSRRHDDS. 2 stretches are compositionally biased toward polar residues: residues 114–167 and 174–193; these read NKYS…TTQG and YSQS…TPSD. Low complexity-rich tracts occupy residues 200-210 and 252-278; these read YDYSSSGSHTH and ATDT…QRNA. Basic and acidic residues predominate over residues 282 to 325; the sequence is EDEHVSMGDKMKGNMEKMAGKLTRDPELVQKGEDLKTGHHSERY.

This is an uncharacterized protein from Schizosaccharomyces pombe (strain 972 / ATCC 24843) (Fission yeast).